The primary structure comprises 341 residues: Dimethylsulfoniopropionate lyase 7 (341 aa).

Composition is skewed to basic and acidic residues over residues 1 to 10 and 319 to 328; these read MAGKDRKTIE and ERKLAKDRQK. Disordered regions lie at residues 1 to 24 and 319 to 341; these read MAGK…GGRF and ERKL…AFDA.

Belongs to the aspartate/glutamate racemases family. ALMA1 subfamily. Homotetramer.

It catalyses the reaction S,S-dimethyl-beta-propiothetin = acrylate + dimethyl sulfide + H(+). Its function is as follows. Mediates cleavage of dimethylsulfoniopropionate (DMSP) into dimethyl sulfide (DMS) and acrylate. DMS is the principal form by which sulfur is transported from oceans to the atmosphere and is a key component of the ocean sulfur cycle. In Emiliania huxleyi (strain CCMP1516), this protein is Dimethylsulfoniopropionate lyase 7.